The sequence spans 350 residues: MGVNLRELIPPEARREVELRALSGYVLALDAYNMLYQFLTAIRQPDGTPLLDREGRVTSHLSGLFYRTINLVEEGIKPVYVFDGKPPEMKSREVEERLRRKAEAEARYRRAVEAGEVEEARKYAMMAARLTSDMVEESKELLDAMGMPWVQAPAEGEAQAAYMARKGDAWATGSQDYDSLLFGSPRLVRNLAITGRRKLPGRDQYVEIKPEIIELEPLLSKLGITREQLIAVGILLGTDYNPGGVRGYGPKTALRLVKSLGDPMKVLASVPRGEYDPDYLRKVYEYFLNPPVTDDYKIEFRKPDQDKVREILVERHDFNPERVERALERLGKAYREKLRGRQSRLDMWFG.

The tract at residues 1 to 101 is N-domain; that stretch reads MGVNLRELIP…REVEERLRRK (101 aa). The Mg(2+) site is built by Asp-30, Asp-83, Glu-155, Glu-157, Asp-176, Asp-178, and Asp-239. Residues 119-261 form an I-domain region; the sequence is EARKYAMMAA…TALRLVKSLG (143 aa). An interaction with PCNA region spans residues 341–349; sequence RQSRLDMWF.

This sequence belongs to the XPG/RAD2 endonuclease family. FEN1 subfamily. Interacts with PCNA. PCNA stimulates the nuclease activity without altering cleavage specificity. It depends on Mg(2+) as a cofactor.

Functionally, structure-specific nuclease with 5'-flap endonuclease and 5'-3' exonuclease activities involved in DNA replication and repair. During DNA replication, cleaves the 5'-overhanging flap structure that is generated by displacement synthesis when DNA polymerase encounters the 5'-end of a downstream Okazaki fragment. Binds the unpaired 3'-DNA end and kinks the DNA to facilitate 5' cleavage specificity. Cleaves one nucleotide into the double-stranded DNA from the junction in flap DNA, leaving a nick for ligation. Also involved in the base excision repair (BER) pathway. Acts as a genome stabilization factor that prevents flaps from equilibrating into structures that lead to duplications and deletions. Also possesses 5'-3' exonuclease activity on nicked or gapped double-stranded DNA. This chain is Flap endonuclease 1, found in Aeropyrum pernix (strain ATCC 700893 / DSM 11879 / JCM 9820 / NBRC 100138 / K1).